We begin with the raw amino-acid sequence, 325 residues long: Glutarate 2-hydroxylase (325 aa).

His-160, Asp-162, and His-292 together coordinate Fe cation.

The protein belongs to the glutarate hydroxylase family. In terms of assembly, homotetramer. It depends on Fe(2+) as a cofactor.

The enzyme catalyses glutarate + 2-oxoglutarate + O2 = (S)-2-hydroxyglutarate + succinate + CO2. Its pathway is amino-acid degradation. Functionally, acts as an alpha-ketoglutarate-dependent dioxygenase catalyzing hydroxylation of glutarate (GA) to L-2-hydroxyglutarate (L2HG). Functions in a L-lysine degradation pathway that proceeds via cadaverine, glutarate and L-2-hydroxyglutarate. Is extremely specific for glutarate, but it can use both 2-oxoglutarate and 2-oxoadipate (2OA) as a cosubstrate for L2HG formation. This is Glutarate 2-hydroxylase from Pseudomonas putida (strain ATCC 47054 / DSM 6125 / CFBP 8728 / NCIMB 11950 / KT2440).